Consider the following 197-residue polypeptide: ATP-dependent Clp protease proteolytic subunit (197 aa).

S101 serves as the catalytic Nucleophile. H126 is a catalytic residue.

This sequence belongs to the peptidase S14 family. Component of the chloroplastic Clp protease core complex.

The protein resides in the plastid. The protein localises to the chloroplast stroma. The enzyme catalyses Hydrolysis of proteins to small peptides in the presence of ATP and magnesium. alpha-casein is the usual test substrate. In the absence of ATP, only oligopeptides shorter than five residues are hydrolyzed (such as succinyl-Leu-Tyr-|-NHMec, and Leu-Tyr-Leu-|-Tyr-Trp, in which cleavage of the -Tyr-|-Leu- and -Tyr-|-Trp bonds also occurs).. Functionally, cleaves peptides in various proteins in a process that requires ATP hydrolysis. Has a chymotrypsin-like activity. Plays a major role in the degradation of misfolded proteins. This is ATP-dependent Clp protease proteolytic subunit from Daucus carota (Wild carrot).